Reading from the N-terminus, the 279-residue chain is Reaction center protein L chain (279 aa).

A run of 3 helical transmembrane segments spans residues 33–56 (GFFGVTTLFFSVLGTALIIWGASQ), 85–113 (GLWQIITVCAIGAFVSWALREVEICRKLG), and 116–141 (YHVPIAFSFAILAYVTLVVIRPILMG). 2 residues coordinate (7R,8Z)-bacteriochlorophyll b: His-154 and His-174. A helical membrane pass occupies residues 171 to 200 (NPAHMLAITFFFTTTLAMSMHGGLILSAAN). His-191 contributes to the Fe cation binding site. An a ubiquinone-binding site is contributed by Phe-217. Residues 226 to 252 (GSLGIHRLGLFLALSAAFWSAVCIVIS) form a helical membrane-spanning segment. His-231 serves as a coordination point for Fe cation.

Belongs to the reaction center PufL/M/PsbA/D family. Reaction center is composed of four bacteriochlorophylls, two bacteriopheophytins, two ubiquinones, one iron, and three highly hydrophobic polypeptide chains (designated L, M, and H).

It localises to the cell inner membrane. In terms of biological role, the reaction center is a membrane-bound complex that mediates the initial photochemical event in the electron transfer process of photosynthesis. The chain is Reaction center protein L chain (pufL) from Rubrivivax gelatinosus (strain NBRC 100245 / IL144).